The primary structure comprises 503 residues: D-xylose-proton symporter-like 1 (503 aa).

Residues 1–23 (MGFDPENQSISSVGQVVGDSSSG) are disordered. Residues 8-23 (QSISSVGQVVGDSSSG) show a composition bias toward low complexity. Transmembrane regions (helical) follow at residues 51–73 (FLFPALGALLFGYEIGATSCAIM), 95–115 (IITSGSLYGALIGSIVAFSVA), 129–149 (FLYLVGAIVTVVAPVFSILII), 152–172 (VTYGMGIGLTMHAAPMYIAET), 190–210 (VLGMVGGYGIGSLWITVISGW), 213–233 (MYATILPFPVIMGTGMCWLPA), 305–325 (ALTIAGGLVLFQQITGQPSVL), 346–366 (ISILLGLLKLVMTGVSVIVID), 374–394 (LLCGVSGMVISLFLLGSYYMF), 405–425 (ALLLYVGCYQLSFGPIGWLMI), 437–457 (GISLAVLVNFGANALVTFAFS), and 467–487 (ILFCAFGVICVVSLFFIYYIV).

The protein belongs to the major facilitator superfamily. Sugar transporter (TC 2.A.1.1) family.

Its subcellular location is the membrane. In Arabidopsis thaliana (Mouse-ear cress), this protein is D-xylose-proton symporter-like 1.